We begin with the raw amino-acid sequence, 722 residues long: G2-specific protein kinase fin1 (722 aa).

One can recognise a Protein kinase domain in the interval 4–281; it reads YKILECIGHG…TYQLLRSPIL (278 aa). ATP contacts are provided by residues 10–18 and lysine 33; that span reads IGHGSFGRI. Residue aspartate 151 is the Proton acceptor of the active site. Residues 528–557 form a disordered region; that stretch reads LSVESDETAVSASSGESVPTDSTLTDTKSK. The span at 535 to 546 shows a compositional bias: polar residues; the sequence is TAVSASSGESVP.

The protein belongs to the protein kinase superfamily. Ser/Thr protein kinase family. NIMA subfamily.

Its subcellular location is the cytoplasm. The protein localises to the cytoskeleton. It is found in the microtubule organizing center. The protein resides in the spindle pole body. The catalysed reaction is L-seryl-[protein] + ATP = O-phospho-L-seryl-[protein] + ADP + H(+). It carries out the reaction L-threonyl-[protein] + ATP = O-phospho-L-threonyl-[protein] + ADP + H(+). In terms of biological role, promotes chromosome condensation and nuclear envelope dynamics during mitosis. Activity appears at metaphase-anaphase transition. The protein is G2-specific protein kinase fin1 (fin1) of Schizosaccharomyces pombe (strain 972 / ATCC 24843) (Fission yeast).